We begin with the raw amino-acid sequence, 285 residues long: MSFIDRNDGGENSIDVDTLRTMIDLYSKNFVEVSSDVEIKTNNIVDKLFAYFKKHNITVINAGIIANNSELIDEDLLDLGTINNGILSLNIQPVTITVDLKSGILNSVKYHQSKLINILLDKNIDPIKIEPKIHLLLSTYKQYEPLVRLVRMKSQVNDFDFVYPLAAHGELDIIKLVMHYYQLQDEIIGKICVQAIMNGRVNIVEHFLTSEAFRSAPDLMYGFFIRGIEHGGHINITKYFIDKGLCIQQNDYEPVKVAAMTKRRDILKYFYELDNSIVNIIIDNV.

ANK repeat units lie at residues 99–129, 157–186, 188–214, and 215–249; these read DLKS…PIKI, NDFD…LQDE, IGKI…EAFR, and SAPD…CIQQ.

This is Putative ankyrin repeat protein R551 from Acanthamoeba polyphaga (Amoeba).